Consider the following 327-residue polypeptide: Small ribosomal subunit protein uS2 (327 aa).

The interval Ala258 to Glu327 is disordered.

This sequence belongs to the universal ribosomal protein uS2 family.

This is Small ribosomal subunit protein uS2 from Anaplasma marginale (strain St. Maries).